Here is a 438-residue protein sequence, read N- to C-terminus: Xanthine permease (438 aa).

The next 13 membrane-spanning stretches (helical) occupy residues 11 to 31 (LGIQ…LIVG), 41 to 61 (LTYL…LQVW), 65 to 85 (FFGI…SPMI), 100 to 120 (IIAS…LVSF), 121 to 141 (FPPV…MPVA), 154 to 174 (FGDL…VLLY), 180 to 200 (FIKS…AYFM), 220 to 240 (FYFG…IVAI), 272 to 292 (AEGL…TAFS), 308 to 328 (VIVV…IAAF), 331 to 351 (IIPS…VIAY), 367 to 387 (LLIV…PDIF), and 396 to 416 (LLTT…NIVY).

Belongs to the nucleobase:cation symporter-2 (NCS2) (TC 2.A.40) family.

Its subcellular location is the cell membrane. Functionally, transport of xanthine in the cell. The polypeptide is Xanthine permease (pbuX) (Bacillus subtilis (strain 168)).